The following is a 273-amino-acid chain: Oligodendrocyte transcription factor 3 (273 aa).

The span at 1-14 (MNSDSSSVSSRASS) shows a compositional bias: low complexity. Residues 1–72 (MNSDSSSVSS…KAAGESSKYK (72 aa)) form a disordered region. The segment covering 24-34 (DHHHRHHHHHQ) has biased composition (basic residues). Positions 37-47 (RLNSVSSTQGD) are enriched in polar residues. Positions 69–90 (SKYKIKKQLSEQDLQQLRLKIN) form a coiled coil. In terms of domain architecture, bHLH spans 84-138 (QLRLKINGRERKRMHDLNLAMDGLREVMPYAHGPSVRKLSKIATLLLARNYILML).

Weakly expressed, mainly in non-neural tissues.

The protein resides in the nucleus. Functionally, may determine the distinct specification program of class A neurons in the dorsal part of the spinal cord and suppress specification of class B neurons. The polypeptide is Oligodendrocyte transcription factor 3 (Olig3) (Mus musculus (Mouse)).